We begin with the raw amino-acid sequence, 343 residues long: Tetraacyldisaccharide 4'-kinase (343 aa).

ATP is bound at residue 53 to 60 (TCGGAGKT).

This sequence belongs to the LpxK family.

The enzyme catalyses a lipid A disaccharide + ATP = a lipid IVA + ADP + H(+). It functions in the pathway glycolipid biosynthesis; lipid IV(A) biosynthesis; lipid IV(A) from (3R)-3-hydroxytetradecanoyl-[acyl-carrier-protein] and UDP-N-acetyl-alpha-D-glucosamine: step 6/6. Functionally, transfers the gamma-phosphate of ATP to the 4'-position of a tetraacyldisaccharide 1-phosphate intermediate (termed DS-1-P) to form tetraacyldisaccharide 1,4'-bis-phosphate (lipid IVA). This Bartonella quintana (strain Toulouse) (Rochalimaea quintana) protein is Tetraacyldisaccharide 4'-kinase.